We begin with the raw amino-acid sequence, 26 residues long: Somatostatin-1 (26 aa).

A disulfide bridge links C15 with C26.

This sequence belongs to the somatostatin family.

Its subcellular location is the secreted. Functionally, somatostatin inhibits the release of somatotropin. The sequence is that of Somatostatin-1 (sst1) from Amia calva (Bowfin).